Reading from the N-terminus, the 360-residue chain is MTVTALGVPTVRGRSEGSAVASDAPGDGPLLDRFGRSATDLRVSLTDRCNLRCGYCMPAEGLNWLPGEQLLGPAELARLPRIAVTPLGITSVRFTGGEPLLARHLEEVVAAAAQLRPRPEISLTTNGVGLAKRAAALAEAGLDRVNVSLDTVDRAHFAAVTRRDRLTDVLDGLAGARAAGLTPVKVNAVLDPETGRQDVVELLRFCLEQGYQLRVIEQMPLDAGHQWRRNALLGSDDVLAALQPHFRLRPDPAPRGSAPAELWLVDAGPDTPAGKFGVIASVSHAFCSTCDRTRLTADGQVRSCLFSTEETDLRGLLRAGAGDEAIEAAWRGAMWAKPAGHGINNPDFLQPQRPMSAIGG.

The interval 1–31 is disordered; that stretch reads MTVTALGVPTVRGRSEGSAVASDAPGDGPLL. The Radical SAM core domain maps to 33–251; sequence RFGRSATDLR…LQPHFRLRPD (219 aa). Arg42 contacts GTP. [4Fe-4S] cluster-binding residues include Cys49 and Cys53. Tyr55 serves as a coordination point for S-adenosyl-L-methionine. Cys56 lines the [4Fe-4S] cluster pocket. Arg93 is a binding site for GTP. Residue Gly97 coordinates S-adenosyl-L-methionine. Thr124 contacts GTP. Position 148 (Ser148) interacts with S-adenosyl-L-methionine. Residue Lys185 coordinates GTP. An S-adenosyl-L-methionine-binding site is contributed by Met219. [4Fe-4S] cluster-binding residues include Cys287 and Cys290. 292 to 294 serves as a coordination point for GTP; the sequence is RTR. A [4Fe-4S] cluster-binding site is contributed by Cys304.

The protein belongs to the radical SAM superfamily. MoaA family. In terms of assembly, monomer and homodimer. [4Fe-4S] cluster is required as a cofactor.

The catalysed reaction is GTP + AH2 + S-adenosyl-L-methionine = (8S)-3',8-cyclo-7,8-dihydroguanosine 5'-triphosphate + 5'-deoxyadenosine + L-methionine + A + H(+). The protein operates within cofactor biosynthesis; molybdopterin biosynthesis. In terms of biological role, catalyzes the cyclization of GTP to (8S)-3',8-cyclo-7,8-dihydroguanosine 5'-triphosphate. This is GTP 3',8-cyclase from Mycobacterium ulcerans (strain Agy99).